The following is a 286-amino-acid chain: Ribose-5-phosphate isomerase (286 aa).

Belongs to the ribose 5-phosphate isomerase family.

The protein resides in the cytoplasm. The catalysed reaction is aldehydo-D-ribose 5-phosphate = D-ribulose 5-phosphate. It participates in carbohydrate degradation; pentose phosphate pathway; D-ribose 5-phosphate from D-ribulose 5-phosphate (non-oxidative stage): step 1/1. The protein is Ribose-5-phosphate isomerase (RKI1) of Mycosarcoma maydis (Corn smut fungus).